We begin with the raw amino-acid sequence, 1240 residues long: Cohesin subunit SA-3 (1240 aa).

The span at 1-25 shows a compositional bias: low complexity; that stretch reads MPTLWSPSTQHHGSSSGSESSPLQK. The segment at 1 to 108 is disordered; sequence MPTLWSPSTQ…VSSGNGKNES (108 aa). Residues 97–108 are compositionally biased toward polar residues; the sequence is RIVSSGNGKNES. In terms of domain architecture, SCD spans 324-409; the sequence is FVHRYRDILP…NRFKDRMVSM (86 aa). Disordered stretches follow at residues 1077–1154 and 1213–1240; these read AEAS…PELI and DKMLHSPSSPSEHGLDLLDTTELNMEDF. Polar residues predominate over residues 1115-1125; the sequence is GPTTPTLTSTA. Over residues 1126 to 1141 the composition is skewed to basic residues; it reads VKRKQSLRTVGKKQKG. Position 1218 is a phosphoserine (serine 1218).

Belongs to the SCC3 family. As to quaternary structure, component of the meiosis-specific cohesin complex, which also contains the SMC1 (SMC1A or SMC1B) and SMC3 heterodimer. Such complex likely contains RAD21, or the meiosis-specific related protein REC8. Interacts with CCDC79/TERB1; recruiting cohesin to telomeres to develop structural rigidity. In terms of processing, phosphorylated. As to expression, testis specific.

It localises to the nucleus. The protein localises to the chromosome. The protein resides in the centromere. Functionally, meiosis specific component of cohesin complex. The cohesin complex is required for the cohesion of sister chromatids after DNA replication. The cohesin complex apparently forms a large proteinaceous ring within which sister chromatids can be trapped. At anaphase, the complex is cleaved and dissociates from chromatin, allowing sister chromatids to segregate. The meiosis-specific cohesin complex probably replaces mitosis specific cohesin complex when it dissociates from chromatin during prophase I. The polypeptide is Cohesin subunit SA-3 (Stag3) (Mus musculus (Mouse)).